A 281-amino-acid chain; its full sequence is Probable ABC transporter ATP-binding protein AZC_3926 (281 aa).

A disordered region spans residues 1-38 (MNVLSMFGRNATRETSSPAATAGRYADEGDWEGDDHQP). The 233-residue stretch at 45-277 (LAAFGLAKSY…PDVRRLYLGE (233 aa)) folds into the ABC transporter domain. 77–84 (GPNGAGKT) is a binding site for ATP.

The protein belongs to the ABC transporter superfamily.

The protein is Probable ABC transporter ATP-binding protein AZC_3926 of Azorhizobium caulinodans (strain ATCC 43989 / DSM 5975 / JCM 20966 / LMG 6465 / NBRC 14845 / NCIMB 13405 / ORS 571).